The chain runs to 20 residues: Apidaecin 1+ (20 aa).

The tract at residues 1-20 (GKPNRPRPAPIQPRPPHPRL) is disordered.

This sequence belongs to the apidaecin family.

It is found in the secreted. Its function is as follows. Antimicrobial peptide active against many Gram-negative enterobacterial and plant-associated bacterial species. Not active against other bacterial species like H.pylori, P.mirabilis, B.pertussis or N.gonorrhoeae. Functionally, among others, also active against C.jejuni and L.pneumophila but not against Y.enterocolitica. In terms of biological role, among others, also active against Y.enterocolitica butnot against L.pneumophila and C.jejuni. This Pimpla disparis (Parasitic wasp) protein is Apidaecin 1+.